A 210-amino-acid chain; its full sequence is MANVKLFNQGCQEIGTVDLAPEVFEVEVQPELLHLVVRAQLAAKRAGTHSVKTRAFVSGGGKKPWRQKGTGRARAGSTRSPLWRGGAVVHGPQPRDYTFKVNRKVRQLALRMALSAKLVEDQLVLLDAIAFPEVKTKLMAKVVSDFSWKKALIVLPESDNNLELSARNLPGIKVVRQDMLNVYDVLLHDHVVMMKDAALKVQERLGHGIR.

Residues 56–80 (FVSGGGKKPWRQKGTGRARAGSTRS) are disordered.

Belongs to the universal ribosomal protein uL4 family. In terms of assembly, part of the 50S ribosomal subunit.

Functionally, one of the primary rRNA binding proteins, this protein initially binds near the 5'-end of the 23S rRNA. It is important during the early stages of 50S assembly. It makes multiple contacts with different domains of the 23S rRNA in the assembled 50S subunit and ribosome. Forms part of the polypeptide exit tunnel. In Solidesulfovibrio magneticus (strain ATCC 700980 / DSM 13731 / RS-1) (Desulfovibrio magneticus), this protein is Large ribosomal subunit protein uL4.